The following is a 414-amino-acid chain: DNA primase small subunit PriS (414 aa).

Catalysis depends on residues Asp98, Asp100, and Asp312.

This sequence belongs to the eukaryotic-type primase small subunit family. As to quaternary structure, heterodimer of a small subunit (PriS) and a large subunit (PriL). Mg(2+) serves as cofactor. The cofactor is Mn(2+).

In terms of biological role, catalytic subunit of DNA primase, an RNA polymerase that catalyzes the synthesis of short RNA molecules used as primers for DNA polymerase during DNA replication. The small subunit contains the primase catalytic core and has DNA synthesis activity on its own. Binding to the large subunit stabilizes and modulates the activity, increasing the rate of DNA synthesis while decreasing the length of the DNA fragments, and conferring RNA synthesis capability. The DNA polymerase activity may enable DNA primase to also catalyze primer extension after primer synthesis. May also play a role in DNA repair. The polypeptide is DNA primase small subunit PriS (Methanosarcina acetivorans (strain ATCC 35395 / DSM 2834 / JCM 12185 / C2A)).